A 312-amino-acid polypeptide reads, in one-letter code: 1-(5-phosphoribosyl)-5-[(5-phosphoribosylamino)methylideneamino] imidazole-4-carboxamide isomerase HISN3, chloroplastic (312 aa).

A chloroplast-targeting transit peptide spans 1-67; sequence MRSPASTPSI…IHKGKVKQIV (67 aa). Aspartate 57 is a binding site for 1-(5-phospho-beta-D-ribosyl)-5-[(5-phospho-beta-D-ribosylamino)methylideneamino]imidazole-4-carboxamide. Glutamine 65 lines the 5-[(5-phospho-1-deoxy-D-ribulos-1-ylimino)methylamino]-1-(5-phospho-beta-D-ribosyl)imidazole-4-carboxamide pocket. Residues glutamine 65 and isoleucine 66 each coordinate Na(+). Glycine 68 is a 1-(5-phospho-beta-D-ribosyl)-5-[(5-phospho-beta-D-ribosylamino)methylideneamino]imidazole-4-carboxamide binding site. Residues histidine 108, glycine 138, threonine 158, and serine 159 each contribute to the 5-[(5-phospho-1-deoxy-D-ribulos-1-ylimino)methylamino]-1-(5-phospho-beta-D-ribosyl)imidazole-4-carboxamide site. 3 residues coordinate 1-(5-phospho-beta-D-ribosyl)-5-[(5-phospho-beta-D-ribosylamino)methylideneamino]imidazole-4-carboxamide: glycine 138, threonine 158, and serine 159. Serine 159 and phenylalanine 162 together coordinate Na(+). 1-(5-phospho-beta-D-ribosyl)-5-[(5-phospho-beta-D-ribosylamino)methylideneamino]imidazole-4-carboxamide contacts are provided by aspartate 187, arginine 203, tryptophan 204, and histidine 230. Aspartate 187 is a 5-[(5-phospho-1-deoxy-D-ribulos-1-ylimino)methylamino]-1-(5-phospho-beta-D-ribosyl)imidazole-4-carboxamide binding site. Tryptophan 204 is a binding site for 5-[(5-phospho-1-deoxy-D-ribulos-1-ylimino)methylamino]-1-(5-phospho-beta-D-ribosyl)imidazole-4-carboxamide. Position 235 (glutamate 235) interacts with Na(+). 1-(5-phospho-beta-D-ribosyl)-5-[(5-phospho-beta-D-ribosylamino)methylideneamino]imidazole-4-carboxamide contacts are provided by glycine 236, glycine 262, glycine 285, and serine 286. 5-[(5-phospho-1-deoxy-D-ribulos-1-ylimino)methylamino]-1-(5-phospho-beta-D-ribosyl)imidazole-4-carboxamide contacts are provided by glycine 236, glycine 262, glycine 285, and serine 286.

It belongs to the HisA/HisF family. The cofactor is Na(+).

It localises to the plastid. It is found in the chloroplast. The enzyme catalyses 1-(5-phospho-beta-D-ribosyl)-5-[(5-phospho-beta-D-ribosylamino)methylideneamino]imidazole-4-carboxamide = 5-[(5-phospho-1-deoxy-D-ribulos-1-ylimino)methylamino]-1-(5-phospho-beta-D-ribosyl)imidazole-4-carboxamide. Its pathway is amino-acid biosynthesis; L-histidine biosynthesis; L-histidine from 5-phospho-alpha-D-ribose 1-diphosphate: step 4/9. Its function is as follows. Component of the histidine biosynthesis pathway that catalyzes the isomerization of 5'-ProFAR (pro-phosphoribosyl formimino-5-aminoimidazole-4-carboxamide ribonucleotide, referred as 1-(5-phospho-beta-D-ribosyl)-5-[(5-phospho-beta-D-ribosylamino)methylideneamino]imidazole-4-carboxamide) to PrFAR (phosphoribulosyl formimino-5-aminoimidazole-4-carboxamide ribonucleotide, referred as 5-[(5-phospho-1-deoxy-D-ribulos-1-ylimino)methylamino]-1-(5-phospho-beta-D-ribosyl)imidazole-4-carboxamide). The chain is 1-(5-phosphoribosyl)-5-[(5-phosphoribosylamino)methylideneamino] imidazole-4-carboxamide isomerase HISN3, chloroplastic from Medicago truncatula (Barrel medic).